The sequence spans 548 residues: 5-epi-aristolochene synthase (548 aa).

Residues R264, D301, D305, R441, and D444 each contribute to the (2E,6E)-farnesyl diphosphate site. Mg(2+) is bound by residues D301 and D305. A DDXXD motif motif is present at residues 301–305; that stretch reads DDTFD. 4 residues coordinate Mg(2+): D444, D445, T448, and E452.

The protein belongs to the terpene synthase family. Monomer. Mg(2+) is required as a cofactor. Post-translationally, self-alkylated at Tyr-520 in the presence of (2Z,6E)-farnesyl diphosphate ((Z,E)-FPP). Self-alkylated at Asp-444 at warm temperature (42 degrees Celsius) in the presence of (2E,6E)-farnesyl diphosphate ((E,E)-FPP).

The protein localises to the cytoplasm. The enzyme catalyses (2E,6E)-farnesyl diphosphate = (+)-5-epi-aristolochene + diphosphate. The catalysed reaction is (2Z,6E)-farnesyl diphosphate = (+)-2-epi-prezizaene + diphosphate. It catalyses the reaction (2Z,6E)-farnesyl diphosphate = (-)-alpha-cedrene + diphosphate. It carries out the reaction (2Z,6E)-farnesyl diphosphate = (-)-beta-curcumene + diphosphate. The protein operates within secondary metabolite biosynthesis; terpenoid biosynthesis. Inhibited activity toward farnesyl diphosphate (FPP) by anilinogeranyl diphosphate (AGPP); AGPP undergoes a cyclization event leading to the formation of a novel macrocyclic paracyclophane alkaloid. Repressed by sesquilavandulyl diphosphate (SPP) via the induction of self-alkyation. In terms of biological role, catalyzes the cyclization of trans,trans-farnesyl diphosphate (FPP) to the bicyclic intermediate 5-epi-aristolochene, initial step in the conversion of FPP to the sesquiterpenoid antifungal phytoalexin capsidiol. Produces germacrene A as an enzyme-bound intermediate that is not released by the enzyme, but is further cyclized to produce the bicyclic 5-epi-aristolochene. Mediates, at low levels, the formation of 4-epi-eremophilene and premnaspirodiene from trans,trans-farnesyl diphosphate. Also mediates the conversion of cis,trans-farnesyl diphosphate to cisoid minor products such as (+)-2-epi-prezizaene, (-)-alpha-cedrene and, to a lesser extent, (-)-beta-curcumene; also produces, at low levels, alpha-acoradiene and 4-epi-alpha-acoradiene, but barely nerolidol, alpha-bisabolol, epi-alpha-bisabolol and cis-farnesol. The polypeptide is 5-epi-aristolochene synthase (EAS3) (Nicotiana tabacum (Common tobacco)).